We begin with the raw amino-acid sequence, 327 residues long: Serine/threonine-protein phosphatase PP2A catalytic subunit (327 aa).

Asp75, His77, Asp103, and Asn135 together coordinate Mn(2+). The active-site Proton donor is His136. 2 residues coordinate Mn(2+): His185 and His259. At Leu327 the chain carries Leucine methyl ester.

The protein belongs to the PPP phosphatase family. PP-2A subfamily. The cofactor is Mn(2+).

The catalysed reaction is O-phospho-L-seryl-[protein] + H2O = L-seryl-[protein] + phosphate. It carries out the reaction O-phospho-L-threonyl-[protein] + H2O = L-threonyl-[protein] + phosphate. The polypeptide is Serine/threonine-protein phosphatase PP2A catalytic subunit (pph-1) (Neurospora crassa (strain ATCC 24698 / 74-OR23-1A / CBS 708.71 / DSM 1257 / FGSC 987)).